The following is a 364-amino-acid chain: Bifunctional protein Rv2228c (364 aa).

An RNase H type-1 domain is found at 1 to 139 (MKVVIEADGG…MDAAAQSAAA (139 aa)). Positions 8, 49, 73, and 123 each coordinate Mg(2+). The active-site Tele-phosphohistidine intermediate is histidine 172. Glutamate 246 functions as the Proton donor/acceptor; for phosphatase activity in the catalytic mechanism.

In the N-terminal section; belongs to the RNase H family. It in the C-terminal section; belongs to the histidine phosphatase superfamily. The N-terminal domain alone is monomeric in solution but associates in the crystal to form a dimer. The cofactor is Mg(2+).

It catalyses the reaction Endonucleolytic cleavage to 5'-phosphomonoester.. It carries out the reaction adenosylcob(III)alamin 5'-phosphate + H2O = adenosylcob(III)alamin + phosphate. The enzyme catalyses alpha-ribazole 5'-phosphate + H2O = alpha-ribazole + phosphate. It functions in the pathway nucleoside biosynthesis; alpha-ribazole biosynthesis; alpha-ribazole from 5,6-dimethylbenzimidazole: step 2/2. Endonuclease that displays both RNase H activity with a hybrid RNA/DNA substrate as well as double-stranded RNase activity. As the only authenticated RNase HI in M.tuberculosis, probably plays an important role in the physiology of this organism, being likely involved in bacterial replication. In terms of biological role, catalyzes the hydrolysis of the phospho group from alpha-ribazole 5'-phosphate to form alpha-ribazole. May also catalyze the conversion of adenosylcobalamin 5'-phosphate to adenosylcobalamin (vitamin B12). Has a possible role in B12 recycling, but the primary role of the C-terminal domain of this phosphatase enzyme could be phosphate generation to help bacterial survival within the macrophage, which is a phosphate-deprived environment. This is Bifunctional protein Rv2228c from Mycobacterium tuberculosis (strain ATCC 25618 / H37Rv).